We begin with the raw amino-acid sequence, 51 residues long: Large ribosomal subunit protein eL39 (51 aa).

This sequence belongs to the eukaryotic ribosomal protein eL39 family.

This is Large ribosomal subunit protein eL39 (rpl39e) from Thermoplasma acidophilum (strain ATCC 25905 / DSM 1728 / JCM 9062 / NBRC 15155 / AMRC-C165).